Consider the following 504-residue polypeptide: Maturase K (504 aa).

Belongs to the intron maturase 2 family. MatK subfamily.

The protein resides in the plastid. The protein localises to the chloroplast. Usually encoded in the trnK tRNA gene intron. Probably assists in splicing its own and other chloroplast group II introns. The protein is Maturase K of Olimarabidopsis pumila (Dwarf rocket).